The following is a 119-amino-acid chain: Anamorsin homolog (119 aa).

A disordered region spans residues 33 to 119 (LKQATKGEDC…KVKLNLTDDI (87 aa)). 4 residues coordinate [2Fe-2S] cluster: Cys-42, Cys-49, Cys-52, and Cys-54. A fe-S binding site A region spans residues 42-54 (CTTRRRACKNCVC). Residues Cys-81, Cys-84, Cys-92, and Cys-95 each coordinate [4Fe-4S] cluster. 2 short sequence motifs (cx2C motif) span residues 81 to 84 (CGNC) and 92 to 95 (CANC). The tract at residues 81–95 (CGNCAKGDAFRCANC) is fe-S binding site B.

This sequence belongs to the anamorsin family. Monomer. The cofactor is [2Fe-2S] cluster. [4Fe-4S] cluster is required as a cofactor.

Its subcellular location is the cytoplasm. It is found in the mitochondrion intermembrane space. Functionally, component of the cytosolic iron-sulfur (Fe-S) protein assembly (CIA) machinery. Required for the maturation of extramitochondrial Fe-S proteins. Part of an electron transfer chain functioning in an early step of cytosolic Fe-S biogenesis, facilitating the de novo assembly of a [4Fe-4S] cluster on the cytosolic Fe-S scaffold complex. Electrons are transferred from NADPH via a FAD- and FMN-containing diflavin oxidoreductase. Together with the diflavin oxidoreductase, also required for the assembly of the diferric tyrosyl radical cofactor of ribonucleotide reductase (RNR), probably by providing electrons for reduction during radical cofactor maturation in the catalytic small subunit. The polypeptide is Anamorsin homolog (Leishmania braziliensis).